Here is a 309-residue protein sequence, read N- to C-terminus: Transcriptional regulator HilD (309 aa).

The HTH araC/xylS-type domain maps to 209 to 306 (ERVYNIISSS…KTTPSTFIKM (98 aa)). 2 consecutive DNA-binding regions (H-T-H motif) follow at residues 226-247 (TDVA…AEEG) and 273-296 (VNAV…KKYF).

In Salmonella typhimurium (strain SL1344), this protein is Transcriptional regulator HilD (hilD).